We begin with the raw amino-acid sequence, 813 residues long: Calpain-7 (813 aa).

Met-1 carries the post-translational modification N-acetylmethionine. Thr-95 is modified (phosphothreonine). The Calpain catalytic domain maps to 232–540 (RERFAYPMPF…YDVIYLSWNP (309 aa)). Catalysis depends on residues Cys-290, His-458, and Asn-478. The domain III stretch occupies residues 541–701 (GLFKESTCIH…INGKWSGQSA (161 aa)). The tract at residues 702-813 (GGCGNFQETH…IIPIKITQLQ (112 aa)) is domain N.

Belongs to the peptidase C2 family. Ubiquitous.

The protein localises to the nucleus. Functionally, calcium-regulated non-lysosomal thiol-protease. The polypeptide is Calpain-7 (CAPN7) (Homo sapiens (Human)).